The chain runs to 807 residues: Leucine--tRNA ligase (807 aa).

Positions 40–51 (PYPSGSGLHVGH) match the 'HIGH' region motif. Positions 576–580 (KMSKS) match the 'KMSKS' region motif. Lys-579 is an ATP binding site.

This sequence belongs to the class-I aminoacyl-tRNA synthetase family.

It is found in the cytoplasm. The enzyme catalyses tRNA(Leu) + L-leucine + ATP = L-leucyl-tRNA(Leu) + AMP + diphosphate. This is Leucine--tRNA ligase from Chlorobaculum parvum (strain DSM 263 / NCIMB 8327) (Chlorobium vibrioforme subsp. thiosulfatophilum).